The sequence spans 358 residues: GTPase Obg (358 aa).

Positions 1-158 (MFVDNVDIYV…RHVRLELKLI (158 aa)) constitute an Obg domain. Residues 159-355 (ADVGLVGFPN…LKYLLHESVR (197 aa)) form the OBG-type G domain. GTP-binding positions include 165–172 (GFPNVGKS), 190–194 (FTTLI), 212–215 (DIPG), 280–283 (SKVD), and 336–338 (SSA). Residues serine 172 and threonine 192 each coordinate Mg(2+).

Belongs to the TRAFAC class OBG-HflX-like GTPase superfamily. OBG GTPase family. Monomer. Mg(2+) is required as a cofactor.

Its subcellular location is the cytoplasm. In terms of biological role, an essential GTPase which binds GTP, GDP and possibly (p)ppGpp with moderate affinity, with high nucleotide exchange rates and a fairly low GTP hydrolysis rate. Plays a role in control of the cell cycle, stress response, ribosome biogenesis and in those bacteria that undergo differentiation, in morphogenesis control. The protein is GTPase Obg of Wolinella succinogenes (strain ATCC 29543 / DSM 1740 / CCUG 13145 / JCM 31913 / LMG 7466 / NCTC 11488 / FDC 602W) (Vibrio succinogenes).